Here is a 421-residue protein sequence, read N- to C-terminus: 3-isopropylmalate dehydratase large subunit (421 aa).

C292, C352, and C355 together coordinate [4Fe-4S] cluster.

Belongs to the aconitase/IPM isomerase family. LeuC type 2 subfamily. Heterodimer of LeuC and LeuD. [4Fe-4S] cluster serves as cofactor.

It carries out the reaction (2R,3S)-3-isopropylmalate = (2S)-2-isopropylmalate. It participates in amino-acid biosynthesis; L-leucine biosynthesis; L-leucine from 3-methyl-2-oxobutanoate: step 2/4. Its function is as follows. Catalyzes the isomerization between 2-isopropylmalate and 3-isopropylmalate, via the formation of 2-isopropylmaleate. In Herpetosiphon aurantiacus (strain ATCC 23779 / DSM 785 / 114-95), this protein is 3-isopropylmalate dehydratase large subunit.